The chain runs to 204 residues: Prephenate decarboxylase (204 aa).

The protein belongs to the prephenate decarboxylase family.

It is found in the cytoplasm. It carries out the reaction prephenate + H(+) = 3-[(4R)-4-hydroxycyclohexa-1,5-dien-1-yl]-2-oxopropanoate + CO2. It functions in the pathway antibiotic biosynthesis; bacilysin biosynthesis. Its function is as follows. Part of the bacABCDEF operon responsible for the biosynthesis of the nonribosomally synthesized dipeptide antibiotic bacilysin, composed of L-alanine and L-anticapsin. Bacilysin is an irreversible inactivator of the glutaminase domain of glucosamine synthetase. BacA is an unusual prephenate decarboxylase that avoids the typical aromatization of the cyclohexadienol ring of prephenate. BacA catalyzes the protonation of prephenate (1-carboxy-4-hydroxy-alpha-oxo-2,5-cyclohexadiene-1-propanoic acid) at C6 position, followed by a decarboxylation to produce the endocyclic-delta(4),delta(8)-7R-dihydro-hydroxyphenylpyruvate (en-H2HPP). En-H2HPP is able to undergo a slow nonenzymatic isomerization to produce the exocyclic-delta(3),delta(5)-dihydro-hydroxyphenylpyruvate (ex-H2HPP). BacA isomerizes only the pro-R double bond in prephenate. The chain is Prephenate decarboxylase from Bacillus subtilis (strain 168).